A 536-amino-acid chain; its full sequence is Chaperonin GroEL (536 aa).

Residues 29–32 (TLGP), 86–90 (DGTTT), Gly-412, and Asp-493 each bind ATP.

This sequence belongs to the chaperonin (HSP60) family. In terms of assembly, forms a cylinder of 14 subunits composed of two heptameric rings stacked back-to-back. Interacts with the co-chaperonin GroES.

It is found in the cytoplasm. The enzyme catalyses ATP + H2O + a folded polypeptide = ADP + phosphate + an unfolded polypeptide.. Functionally, together with its co-chaperonin GroES, plays an essential role in assisting protein folding. The GroEL-GroES system forms a nano-cage that allows encapsulation of the non-native substrate proteins and provides a physical environment optimized to promote and accelerate protein folding. The sequence is that of Chaperonin GroEL from Aster yellows witches'-broom phytoplasma (strain AYWB).